The primary structure comprises 175 residues: Translation initiation factor IF-3 (175 aa).

It belongs to the IF-3 family. As to quaternary structure, monomer.

Its subcellular location is the cytoplasm. IF-3 binds to the 30S ribosomal subunit and shifts the equilibrium between 70S ribosomes and their 50S and 30S subunits in favor of the free subunits, thus enhancing the availability of 30S subunits on which protein synthesis initiation begins. This is Translation initiation factor IF-3 from Staphylococcus aureus (strain NCTC 8325 / PS 47).